The primary structure comprises 503 residues: Variant surface glycoprotein ILTAT 1.3 (503 aa).

A signal peptide spans 1–29 (MTKAYENRMLLQALVLAAVLCTTHAEGTA). 2 disulfide bridges follow: C42-C168 and C150-C206. N-linked (GlcNAc...) asparagine glycosylation is found at N419 and N432. D480 carries GPI-anchor amidated aspartate lipidation. Positions 481-503 (SSFILNKQFALSVVSAAFAALLF) are cleaved as a propeptide — removed in mature form.

The protein resides in the cell membrane. Functionally, VSG forms a coat on the surface of the parasite. The trypanosome evades the immune response of the host by expressing a series of antigenically distinct VSGs from an estimated 1000 VSG genes. This Trypanosoma brucei brucei protein is Variant surface glycoprotein ILTAT 1.3.